The sequence spans 260 residues: Carbonic anhydrase 2 (260 aa).

N-acetylserine is present on Ser-2. Ser-2 carries the post-translational modification Phosphoserine. Residues 3-259 (HHWGYGKHNG…LKNRQVRGFP (257 aa)) form the Alpha-carbonic anhydrase domain. Residue His-64 is the Proton donor/acceptor of the active site. The Zn(2+) site is built by His-94, His-96, and His-119. 2 positions are modified to phosphoserine: Ser-165 and Ser-172. 198–199 (TT) serves as a coordination point for substrate.

The protein belongs to the alpha-carbonic anhydrase family. Interacts with SLC4A4. Interaction with SLC4A7 regulates SLC4A7 transporter activity. Requires Zn(2+) as cofactor.

Its subcellular location is the cytoplasm. It is found in the cell membrane. It catalyses the reaction hydrogencarbonate + H(+) = CO2 + H2O. The catalysed reaction is urea = cyanamide + H2O. Inhibited by acetazolamide. Catalyzes the reversible hydration of carbon dioxide. Can also hydrate cyanamide to urea. Involved in the regulation of fluid secretion into the anterior chamber of the eye. Essential for bone resorption and osteoclast differentiation. Contributes to intracellular pH regulation in the duodenal upper villous epithelium during proton-coupled peptide absorption. Stimulates the chloride-bicarbonate exchange activity of SLC26A6. This is Carbonic anhydrase 2 (CA2) from Bos taurus (Bovine).